A 237-amino-acid chain; its full sequence is Ras modification protein ERF4 (237 aa).

The protein belongs to the ERF4 family. In terms of assembly, interacts with ERF2.

It is found in the endoplasmic reticulum membrane. In terms of biological role, the ERF2-SHR5 complex is a palmitoyltransferase specific for Ras proteins. Palmitoylates RAS2, which is required for its proper plasma membrane localization. The chain is Ras modification protein ERF4 (SHR5) from Saccharomyces cerevisiae (strain ATCC 204508 / S288c) (Baker's yeast).